The primary structure comprises 20 residues: Zinc metalloproteinase-disintegrin-like uracoina-1 (20 aa).

The protein belongs to the venom metalloproteinase (M12B) family. P-III subfamily. In terms of assembly, monomer. Zn(2+) serves as cofactor. Expressed by the venom gland.

It localises to the secreted. Inhibited by ethylenediaminetetraacetic acid (EDTA) and 1,10-phenanthroline. Not inhibited by tosyl-L-lysine chloromethyl ketone (TCLK) and phenylmethanesulfonylfluoride (PMSF). Snake venom zinc metalloprotease that possesses hemorrhagic activity (minimum hemorrhagic dose, MHD=4.7 ug) when injected intradermally into mice. Degrades the alpha-chain of fibrinogen (FGA). The sequence is that of Zinc metalloproteinase-disintegrin-like uracoina-1 from Crotalus vegrandis (Uracoan rattlesnake).